We begin with the raw amino-acid sequence, 512 residues long: MIKDMIDSIEQFAQTQADFPVYDCLGERRTYGQLKRDSDSIAAFIDSLALLAKSPVLVFGAQTYDMLATFVALTKSGHAYIPVDVHSAPERILAIIEIAKPSLIIAIEEFPLTIEGISLVSLSEIESAKLAEMPYERTHSVKGDDNYYIIFTSGTTGQPKGVQISHDNLLSFTNWMIEDAAFDVPKQPQMLAQPPYSFDLSVMYWAPTLALGGTLFALPKELVADFKQLFTTIAQLPVGIWTSTPSFADMAMLSDDFCQAKMPALTHFYFDGEELTVSTARKLFERFPSAKIINAYGPTEATVALSAIEITREMVDNYTRLPIGYPKPDSPTYIIDEDGKELASGEQGEIIVTGPAVSKGYLNNPEKTAEAFFTFKGQPAYHTGDIGSLTEDNILLYGGRLDFQIKYAGYRIELEDVSQQLNQSPMVASAVAVPRYNKEHKVQNLLAYIVVKDGVKERFDRELELTKAIKASVKDHMMSYMMPSKFLYRDSLPLTPNGKIDIKTLINEVNNR.

An ATP-binding site is contributed by 152 to 153; the sequence is TS. Asp199 lines the D-alanine pocket. An ATP-binding site is contributed by 294 to 299; the sequence is NAYGPT. Val303 provides a ligand contact to D-alanine. ATP-binding positions include Asp385, 397-400, and Lys499; that span reads YGGR. Lys499 contacts D-alanine.

Belongs to the ATP-dependent AMP-binding enzyme family. DltA subfamily.

The protein resides in the cytoplasm. It catalyses the reaction holo-[D-alanyl-carrier protein] + D-alanine + ATP = D-alanyl-[D-alanyl-carrier protein] + AMP + diphosphate. It participates in cell wall biogenesis; lipoteichoic acid biosynthesis. Functionally, catalyzes the first step in the D-alanylation of lipoteichoic acid (LTA), the activation of D-alanine and its transfer onto the D-alanyl carrier protein (Dcp) DltC. In an ATP-dependent two-step reaction, forms a high energy D-alanyl-AMP intermediate, followed by transfer of the D-alanyl residue as a thiol ester to the phosphopantheinyl prosthetic group of the Dcp. D-alanylation of LTA plays an important role in modulating the properties of the cell wall in Gram-positive bacteria, influencing the net charge of the cell wall. The protein is D-alanine--D-alanyl carrier protein ligase of Streptococcus pyogenes serotype M18 (strain MGAS8232).